We begin with the raw amino-acid sequence, 426 residues long: Glutamate-1-semialdehyde 2,1-aminomutase (426 aa).

K265 carries the post-translational modification N6-(pyridoxal phosphate)lysine.

This sequence belongs to the class-III pyridoxal-phosphate-dependent aminotransferase family. HemL subfamily. As to quaternary structure, homodimer. Pyridoxal 5'-phosphate is required as a cofactor.

The protein resides in the cytoplasm. It carries out the reaction (S)-4-amino-5-oxopentanoate = 5-aminolevulinate. It functions in the pathway porphyrin-containing compound metabolism; protoporphyrin-IX biosynthesis; 5-aminolevulinate from L-glutamyl-tRNA(Glu): step 2/2. This Alteromonas mediterranea (strain DSM 17117 / CIP 110805 / LMG 28347 / Deep ecotype) protein is Glutamate-1-semialdehyde 2,1-aminomutase.